The following is a 634-amino-acid chain: Serine/threonine kinase NLK (634 aa).

One can recognise a Protein kinase domain in the interval 240-531 (SQPDRPIGYG…VEEALQHRYL (292 aa)). ATP-binding positions include 246-254 (IGYGAFGVV) and lysine 269. Residue aspartate 366 is the Proton acceptor of the active site.

It belongs to the protein kinase superfamily. CMGC Ser/Thr protein kinase family. MAP kinase subfamily. Component of the beta-catenin-lit-1 complex (also called the lit-1/wrm-1 complex or the wrm-1/lit-1 kinase complex) at least composed of lit-1 and wrm-1. Interacts with wrm-1 (via N-terminus); the interaction is direct and activates lit-1 kinase activity which leads to the phosphorylation of pop-1. This promotes pop-1 interaction with par-5 and translocation of pop-1 from the nucleus to the cytoplasm. Interacts with pop-1 (when phosphorylated on 'Ser-118' and 'Ser-127'); the interaction is dependent on the beta-catenin-lit-1 complex. Requires Mg(2+) as cofactor. In terms of tissue distribution, expressed in the pharynx and seam and vulval cells.

Its subcellular location is the cytoplasm. It is found in the cell cortex. The protein localises to the nucleus. The catalysed reaction is L-seryl-[protein] + ATP = O-phospho-L-seryl-[protein] + ADP + H(+). It catalyses the reaction L-threonyl-[protein] + ATP = O-phospho-L-threonyl-[protein] + ADP + H(+). In terms of biological role, has a role in the Wnt signaling pathway controlling the asymmetry of cell divisions during embryogenesis. Operates in the AB and EMS cell lineages influencing cell specification. Required for body wall muscle development, endoderm development, pop-1 asymmetry and T-cell division asymmetry. Component of the beta-catenin-lit-1 complex which promotes the phosphorylation, down-regulation and subcellular relocation of pop-1. Regulates plp-1 nuclear localization in embryos. Plays a role in male tail tip morphogenesis. This is Serine/threonine kinase NLK from Caenorhabditis elegans.